We begin with the raw amino-acid sequence, 133 residues long: Arginine decarboxylase proenzyme (133 aa).

Residue S81 is the Schiff-base intermediate with substrate; via pyruvic acid of the active site. At S81 the chain carries Pyruvic acid (Ser); by autocatalysis. H86 (proton acceptor; for processing activity) is an active-site residue. C101 (proton donor; for catalytic activity) is an active-site residue.

This sequence belongs to the prokaryotic AdoMetDC family. Type 1 subfamily. Heterooctamer of four alpha and four beta chains arranged as a tetramer of alpha/beta heterodimers. It depends on pyruvate as a cofactor. In terms of processing, is synthesized initially as an inactive proenzyme. Formation of the active enzyme involves a self-maturation process in which the active site pyruvoyl group is generated from an internal serine residue via an autocatalytic post-translational modification. Two non-identical subunits are generated from the proenzyme in this reaction, and the pyruvate is formed at the N-terminus of the alpha chain, which is derived from the carboxyl end of the proenzyme. The post-translation cleavage follows an unusual pathway, termed non-hydrolytic serinolysis, in which the side chain hydroxyl group of the serine supplies its oxygen atom to form the C-terminus of the beta chain, while the remainder of the serine residue undergoes an oxidative deamination to produce ammonia and the pyruvoyl group blocking the N-terminus of the alpha chain.

The catalysed reaction is L-arginine + H(+) = agmatine + CO2. The protein operates within amine and polyamine biosynthesis; agmatine biosynthesis; agmatine from L-arginine: step 1/1. Its function is as follows. Specifically catalyzes the decarboxylation of L-arginine to agmatine. Has no S-adenosylmethionine decarboxylase (AdoMetDC) activity. This is Arginine decarboxylase proenzyme from Pyrobaculum arsenaticum (strain DSM 13514 / JCM 11321 / PZ6).